The following is a 398-amino-acid chain: O-methyltransferase aoiO (398 aa).

Residue Asp251 coordinates S-adenosyl-L-methionine. His299 acts as the Proton acceptor in catalysis.

Belongs to the class I-like SAM-binding methyltransferase superfamily. Cation-independent O-methyltransferase family.

Its function is as follows. O-methyltransferase; part of the gene cluster that mediates the biosynthesis of a methylated derivative of known natural products orthosporin and diaporthin. Seems not to be involved in the biosynthesis of the identified final product of the pathway and its function has still to be determined. The polypeptide is O-methyltransferase aoiO (Aspergillus oryzae (strain ATCC 42149 / RIB 40) (Yellow koji mold)).